We begin with the raw amino-acid sequence, 149 residues long: Ribonuclease H (149 aa).

Residues 1–145 (MKKVIIYTDG…CDKLANEAMD (145 aa)) form the RNase H type-1 domain. The Mg(2+) site is built by D9, E50, D72, and D137.

Belongs to the RNase H family. In terms of assembly, monomer. The cofactor is Mg(2+).

It is found in the cytoplasm. The catalysed reaction is Endonucleolytic cleavage to 5'-phosphomonoester.. Its function is as follows. Endonuclease that specifically degrades the RNA of RNA-DNA hybrids. The polypeptide is Ribonuclease H (Clostridium botulinum (strain ATCC 19397 / Type A)).